Reading from the N-terminus, the 2077-residue chain is Large tegument protein deneddylase (2077 aa).

Residues M1–F231 are deubiquitination activity. One can recognise a Peptidase C76 domain in the interval I3–D221. Catalysis depends on residues C23, D156, and H158. A region of interest (interaction with inner tegument protein) is located at residue S287.

The protein belongs to the herpesviridae large tegument protein family. Interacts with host CUL1 and CUL4A; these interactions inhibit the E3 ligase activity of cullins. Interacts with inner tegument protein. Interacts with capsid vertex specific component CVC2. Interacts with the major capsid protein/MCP.

It localises to the virion tegument. The protein resides in the host cytoplasm. The protein localises to the host nucleus. It catalyses the reaction Thiol-dependent hydrolysis of ester, thioester, amide, peptide and isopeptide bonds formed by the C-terminal Gly of ubiquitin (a 76-residue protein attached to proteins as an intracellular targeting signal).. Large tegument protein that plays multiple roles in the viral cycle. During viral entry, remains associated with the capsid while most of the tegument is detached and participates in the capsid transport toward the host nucleus. Plays a role in the routing of the capsid at the nuclear pore complex and subsequent uncoating. Within the host nucleus, acts as a deneddylase and promotes the degradation of nuclear CRLs (cullin-RING ubiquitin ligases) and thereby stabilizes nuclear CRL substrates, while cytoplasmic CRLs remain unaffected. These modifications prevent host cell cycle S-phase progression and create a favorable environment allowing efficient viral genome replication. Participates later in the secondary envelopment of capsids. Indeed, plays a linker role for the association of the outer viral tegument to the capsids together with the inner tegument protein. The polypeptide is Large tegument protein deneddylase (U31) (Homo sapiens (Human)).